A 194-amino-acid chain; its full sequence is Ribonuclease HII (194 aa).

The 179-residue stretch at cysteine 16–cysteine 194 folds into the RNase H type-2 domain. A divalent metal cation-binding residues include aspartate 22, glutamate 23, and aspartate 113.

This sequence belongs to the RNase HII family. It depends on Mn(2+) as a cofactor. Mg(2+) serves as cofactor.

The protein localises to the cytoplasm. The enzyme catalyses Endonucleolytic cleavage to 5'-phosphomonoester.. Its function is as follows. Endonuclease that specifically degrades the RNA of RNA-DNA hybrids. The polypeptide is Ribonuclease HII (Rickettsia massiliae (strain Mtu5)).